The primary structure comprises 305 residues: Ribosomal RNA small subunit methyltransferase H (305 aa).

S-adenosyl-L-methionine is bound by residues 30–32 (GGH), D49, F74, D96, and Q103.

This sequence belongs to the methyltransferase superfamily. RsmH family.

Its subcellular location is the cytoplasm. The catalysed reaction is cytidine(1402) in 16S rRNA + S-adenosyl-L-methionine = N(4)-methylcytidine(1402) in 16S rRNA + S-adenosyl-L-homocysteine + H(+). In terms of biological role, specifically methylates the N4 position of cytidine in position 1402 (C1402) of 16S rRNA. This is Ribosomal RNA small subunit methyltransferase H from Francisella tularensis subsp. novicida (strain U112).